The following is a 71-amino-acid chain: MKKEIHPNFKEVKATCTSCGKEHIFGSTVEKISLDVCSNCHAFYTGDRSTVKARGRVERFNKILEKSKTSA.

This sequence belongs to the bacterial ribosomal protein bL31 family. Type A subfamily. In terms of assembly, part of the 50S ribosomal subunit.

Functionally, binds the 23S rRNA. This Metamycoplasma arthritidis (strain 158L3-1) (Mycoplasma arthritidis) protein is Large ribosomal subunit protein bL31.